Consider the following 509-residue polypeptide: Legumin A (509 aa).

The signal sequence occupies residues 1–21 (MAINPSLLFLSLLFLFNGCLA). 2 disulfides stabilise this stretch: Cys34-Cys67 and Cys110-Cys331. The 235-residue stretch at 39-273 (LRASAPQTRI…AFNVDHDIIR (235 aa)) folds into the Cupin type-1 1 domain. Disordered stretches follow at residues 187–248 (AGNP…ESSS) and 298–325 (PRME…QDNG). Over residues 212-228 (EESEEEEGEGEEEEEED) the composition is skewed to acidic residues. Basic and acidic residues predominate over residues 299–314 (RMEEEEREERQQEQRY). The 150-residue stretch at 337 to 486 (ENLADPERAD…SYQVSREDAR (150 aa)) folds into the Cupin type-1 2 domain.

Belongs to the 11S seed storage protein (globulins) family. Hexamer; each subunit is composed of an acidic and a basic chain derived from a single precursor and linked by a disulfide bond.

In terms of biological role, this is a seed storage protein. The protein is Legumin A (LEGA) of Gossypium hirsutum (Upland cotton).